Consider the following 469-residue polypeptide: tRNA-2-methylthio-N(6)-dimethylallyladenosine synthase (469 aa).

In terms of domain architecture, MTTase N-terminal spans 22-142 (RKVFIKTYGC…LPEALRRAKE (121 aa)). 6 residues coordinate [4Fe-4S] cluster: C31, C67, C105, C183, C187, and C190. Residues 169–401 (RARGVTAFLT…QALLLKQQQE (233 aa)) enclose the Radical SAM core domain. The TRAM domain maps to 404–466 (ESCIGKEIDL…TNSLFAERAE (63 aa)).

This sequence belongs to the methylthiotransferase family. MiaB subfamily. In terms of assembly, monomer. It depends on [4Fe-4S] cluster as a cofactor.

The protein localises to the cytoplasm. It catalyses the reaction N(6)-dimethylallyladenosine(37) in tRNA + (sulfur carrier)-SH + AH2 + 2 S-adenosyl-L-methionine = 2-methylsulfanyl-N(6)-dimethylallyladenosine(37) in tRNA + (sulfur carrier)-H + 5'-deoxyadenosine + L-methionine + A + S-adenosyl-L-homocysteine + 2 H(+). In terms of biological role, catalyzes the methylthiolation of N6-(dimethylallyl)adenosine (i(6)A), leading to the formation of 2-methylthio-N6-(dimethylallyl)adenosine (ms(2)i(6)A) at position 37 in tRNAs that read codons beginning with uridine. The sequence is that of tRNA-2-methylthio-N(6)-dimethylallyladenosine synthase from Rhizobium etli (strain ATCC 51251 / DSM 11541 / JCM 21823 / NBRC 15573 / CFN 42).